The chain runs to 302 residues: Serine/threonine-protein phosphatase alpha-3 isoform (302 aa).

4 residues coordinate Mn(2+): Asp-62, His-64, Asp-90, and Asn-122. The active-site Proton donor is His-123. The Mn(2+) site is built by His-171 and His-246.

Belongs to the PPP phosphatase family. PP-1 subfamily. Interacts with Nop17l. The cofactor is Mn(2+).

It carries out the reaction O-phospho-L-seryl-[protein] + H2O = L-seryl-[protein] + phosphate. The catalysed reaction is O-phospho-L-threonyl-[protein] + H2O = L-threonyl-[protein] + phosphate. The polypeptide is Serine/threonine-protein phosphatase alpha-3 isoform (Pp1-13C) (Drosophila melanogaster (Fruit fly)).